The following is a 101-amino-acid chain: Small ribosomal subunit protein uS14 (101 aa).

It belongs to the universal ribosomal protein uS14 family. Part of the 30S ribosomal subunit. Contacts proteins S3 and S10.

Functionally, binds 16S rRNA, required for the assembly of 30S particles and may also be responsible for determining the conformation of the 16S rRNA at the A site. The sequence is that of Small ribosomal subunit protein uS14 from Opitutus terrae (strain DSM 11246 / JCM 15787 / PB90-1).